Reading from the N-terminus, the 155-residue chain is uncharacterized protein (155 aa).

The segment at 135 to 155 (SQANSKNDSNSKDDLPNPFSV) is disordered.

This is an uncharacterized protein from Acidianus convivator (ATV).